We begin with the raw amino-acid sequence, 102 residues long: Matrix Gla protein (102 aa).

Residues S2, S3, and S5 each carry the phosphoserine modification. A disordered region spans residues 18–45; that stretch reads DANSFMRQPRPPNHWDSRDRFKSPRERT. Residues 27–73 enclose the Gla domain; the sequence is RPPNHWDSRDRFKSPRERTREKCEEYRPCERLARQVGLKRAYGKYFG. Residues 30-45 are compositionally biased toward basic and acidic residues; that stretch reads NHWDSRDRFKSPRERT. Residues E43, E47, E50, and E51 each carry the 4-carboxyglutamate modification. The cysteines at positions 49 and 55 are disulfide-linked. Positions 72-102 are disordered; the sequence is FGNRRQRPSTSGRLRPRKYRASRYRNHHYRY. The span at 85–102 shows a compositional bias: basic residues; the sequence is LRPRKYRASRYRNHHYRY.

The protein belongs to the osteocalcin/matrix Gla protein family. Requires vitamin K-dependent gamma-carboxylation for its function. Accounts for 35-40% of the total protein in the acid demineralization extract of calcified cartilage.

It localises to the secreted. Its function is as follows. Associates with the organic matrix of calcified cartilage. This is Matrix Gla protein (mgp) from Galeorhinus galeus (Tope shark).